We begin with the raw amino-acid sequence, 201 residues long: Small ribosomal subunit protein uS4c (201 aa).

One can recognise an S4 RNA-binding domain in the interval 89 to 152; the sequence is MRLDNILFRL…NSRTLVQNLI (64 aa).

Belongs to the universal ribosomal protein uS4 family. In terms of assembly, part of the 30S ribosomal subunit. Contacts protein S5. The interaction surface between S4 and S5 is involved in control of translational fidelity.

It is found in the plastid. Its subcellular location is the chloroplast. Functionally, one of the primary rRNA binding proteins, it binds directly to 16S rRNA where it nucleates assembly of the body of the 30S subunit. Its function is as follows. With S5 and S12 plays an important role in translational accuracy. The polypeptide is Small ribosomal subunit protein uS4c (rps4) (Crucihimalaya wallichii (Rock-cress)).